We begin with the raw amino-acid sequence, 673 residues long: UvrABC system protein B (673 aa).

The Helicase ATP-binding domain maps to 24–182; the sequence is EGVERNDPAQ…YSFVEILYNR (159 aa). Residue 37–44 participates in ATP binding; that stretch reads GVTGSGKT. The Beta-hairpin signature appears at 90-113; it reads YYDYYQPEAFMPTSGLYIEKDLAI. The region spanning 429-591 is the Helicase C-terminal domain; sequence QIDDLLDEIQ…ITPITVNKSK (163 aa). The UVR domain occupies 634-669; the sequence is TKMIDRAKKDMDKAAKDLDFVEAARYRDEMFALQKI.

This sequence belongs to the UvrB family. In terms of assembly, forms a heterotetramer with UvrA during the search for lesions. Interacts with UvrC in an incision complex.

The protein resides in the cytoplasm. Functionally, the UvrABC repair system catalyzes the recognition and processing of DNA lesions. A damage recognition complex composed of 2 UvrA and 2 UvrB subunits scans DNA for abnormalities. Upon binding of the UvrA(2)B(2) complex to a putative damaged site, the DNA wraps around one UvrB monomer. DNA wrap is dependent on ATP binding by UvrB and probably causes local melting of the DNA helix, facilitating insertion of UvrB beta-hairpin between the DNA strands. Then UvrB probes one DNA strand for the presence of a lesion. If a lesion is found the UvrA subunits dissociate and the UvrB-DNA preincision complex is formed. This complex is subsequently bound by UvrC and the second UvrB is released. If no lesion is found, the DNA wraps around the other UvrB subunit that will check the other stand for damage. In Cytophaga hutchinsonii (strain ATCC 33406 / DSM 1761 / CIP 103989 / NBRC 15051 / NCIMB 9469 / D465), this protein is UvrABC system protein B.